Consider the following 373-residue polypeptide: Flagellar P-ring protein (373 aa).

Residues 1–30 (MTNRWSFDVKKNLVTLILTWLCLSISTAQA) form the signal peptide.

This sequence belongs to the FlgI family. In terms of assembly, the basal body constitutes a major portion of the flagellar organelle and consists of four rings (L,P,S, and M) mounted on a central rod.

Its subcellular location is the periplasm. It localises to the bacterial flagellum basal body. Its function is as follows. Assembles around the rod to form the L-ring and probably protects the motor/basal body from shearing forces during rotation. In Aliivibrio salmonicida (strain LFI1238) (Vibrio salmonicida (strain LFI1238)), this protein is Flagellar P-ring protein.